Here is a 507-residue protein sequence, read N- to C-terminus: Ribose import ATP-binding protein RbsA (507 aa).

ABC transporter domains are found at residues 7–242 (LEMR…VGRP) and 253–497 (IPLG…TGVT). Position 39–46 (39–46 (GENGAGKS)) interacts with ATP.

It belongs to the ABC transporter superfamily. Ribose importer (TC 3.A.1.2.1) family. In terms of assembly, the complex is composed of an ATP-binding protein (RbsA), two transmembrane proteins (RbsC) and a solute-binding protein (RbsB).

Its subcellular location is the cell inner membrane. The enzyme catalyses D-ribose(out) + ATP + H2O = D-ribose(in) + ADP + phosphate + H(+). Part of the ABC transporter complex RbsABC involved in ribose import. Responsible for energy coupling to the transport system. In Yersinia pestis bv. Antiqua (strain Antiqua), this protein is Ribose import ATP-binding protein RbsA.